A 288-amino-acid chain; its full sequence is Nucleotide-binding protein NE1849 (288 aa).

8 to 15 (GLSGSGKS) serves as a coordination point for ATP. 57 to 60 (DMRS) contacts GTP.

This sequence belongs to the RapZ-like family.

Displays ATPase and GTPase activities. In Nitrosomonas europaea (strain ATCC 19718 / CIP 103999 / KCTC 2705 / NBRC 14298), this protein is Nucleotide-binding protein NE1849.